Reading from the N-terminus, the 233-residue chain is GSK-3-binding protein FRAT2 (233 aa).

The segment at 1-24 (MPCRREEEEEAGEEAEGEEEEDDS) is disordered. Positions 7–24 (EEEEAGEEAEGEEEEDDS) are enriched in acidic residues. Residues 174 to 196 (DPHRLLQQLVLSGNLIKEAVRRL) form an involved in GSK-3 binding region. A disordered region spans residues 204 to 233 (AATGPASAPGPGGGRSGPDRIALQPSGSLL).

This sequence belongs to the GSK-3-binding protein family. In terms of assembly, binds GSK-3 and prevents GSK-3-dependent phosphorylation.

Positively regulates the Wnt signaling pathway by stabilizing beta-catenin through the association with GSK-3. This is GSK-3-binding protein FRAT2 (FRAT2) from Homo sapiens (Human).